We begin with the raw amino-acid sequence, 1342 residues long: Receptor tyrosine-protein kinase erbB-3 (1342 aa).

The first 19 residues, 1–19 (MRANDALQVLGLLFSLARG), serve as a signal peptide directing secretion. Residues 20–643 (SEVGNSQAVC…LVLIGKTHLT (624 aa)) lie on the Extracellular side of the membrane. C29 and C56 are joined by a disulfide. The N-linked (GlcNAc...) asparagine glycan is linked to N126. 12 cysteine pairs are disulfide-bonded: C156-C183, C186-C194, C190-C202, C210-C218, C214-C226, C227-C235, C231-C243, C246-C255, C259-C286, C290-C301, C305-C320, and C323-C327. N250 is a glycosylation site (N-linked (GlcNAc...) asparagine). 5 N-linked (GlcNAc...) asparagine glycosylation sites follow: N353, N408, N414, N437, and N469. 10 disulfides stabilise this stretch: C500–C509, C504–C517, C520–C529, C533–C549, C552–C565, C556–C573, C576–C585, C589–C610, C613–C621, and C617–C629. N522 carries an N-linked (GlcNAc...) asparagine glycan. N566 carries an N-linked (GlcNAc...) asparagine glycan. The N-linked (GlcNAc...) asparagine glycan is linked to N616. A helical transmembrane segment spans residues 644–664 (MALTVIAGLVVIFMMLGGTFL). Residues 665–1342 (YWRGRRIQNK…LFPKANAQRT (678 aa)) are Cytoplasmic-facing. The residue at position 686 (S686) is a Phosphoserine. In terms of domain architecture, Protein kinase spans 709–966 (LRKLKVLGSG…TFKELANEFT (258 aa)). ATP contacts are provided by residues 715–723 (LGSGVFGTV), K742, 788–790 (QYL), and 834–839 (NLAARN). N834 functions as the Proton acceptor in the catalytic mechanism. Disordered regions lie at residues 980 to 999 (RESGPGIAPGPEPHGLTNKK) and 1033 to 1152 (LPVG…PGLE). S982 bears the Phosphoserine mark. Residues 1042 to 1075 (RGSQSLLSPSSGYMPMNQGNLGESCQESAVSGSS) are compositionally biased toward polar residues.

It belongs to the protein kinase superfamily. Tyr protein kinase family. EGF receptor subfamily. Monomer and homodimer. Heterodimer with each of the other ERBB receptors (Potential). Interacts with CSPG5. Interacts with GRB7. Interacts with MUC1. Interacts with MYOC. Interacts with isoform 2 of PA2G4. Found in a ternary complex with NRG1 and ITGAV:ITGB3 or ITGA6:ITGB4. Autophosphorylated. Ligand-binding increases phosphorylation on tyrosine residues and promotes its association with the p85 subunit of phosphatidylinositol 3-kinase. As to expression, epithelial tissues and brain.

The protein resides in the cell membrane. Its subcellular location is the secreted. The enzyme catalyses L-tyrosyl-[protein] + ATP = O-phospho-L-tyrosyl-[protein] + ADP + H(+). Its function is as follows. Tyrosine-protein kinase that plays an essential role as cell surface receptor for neuregulins. Binds to neuregulin-1 (NRG1) and is activated by it; ligand-binding increases phosphorylation on tyrosine residues and promotes its association with the p85 subunit of phosphatidylinositol 3-kinase. May also be activated by CSPG5. Involved in the regulation of myeloid cell differentiation. This Homo sapiens (Human) protein is Receptor tyrosine-protein kinase erbB-3 (ERBB3).